Consider the following 172-residue polypeptide: Translation initiation factor IF-3 (172 aa).

The protein belongs to the IF-3 family. As to quaternary structure, monomer.

The protein localises to the cytoplasm. In terms of biological role, IF-3 binds to the 30S ribosomal subunit and shifts the equilibrium between 70S ribosomes and their 50S and 30S subunits in favor of the free subunits, thus enhancing the availability of 30S subunits on which protein synthesis initiation begins. The polypeptide is Translation initiation factor IF-3 (Bartonella henselae (strain ATCC 49882 / DSM 28221 / CCUG 30454 / Houston 1) (Rochalimaea henselae)).